Reading from the N-terminus, the 108-residue chain is Putative septation protein SpoVG (108 aa).

The interval 84–108 (FEKQSSVETEPVTEENMETAENENE) is disordered. Residues 94–108 (PVTEENMETAENENE) are compositionally biased toward acidic residues.

Belongs to the SpoVG family.

Its function is as follows. Could be involved in septation. The polypeptide is Putative septation protein SpoVG (Finegoldia magna (strain ATCC 29328 / DSM 20472 / WAL 2508) (Peptostreptococcus magnus)).